The following is a 210-amino-acid chain: Protein-L-isoaspartate O-methyltransferase (210 aa).

Residue serine 52 is part of the active site.

This sequence belongs to the methyltransferase superfamily. L-isoaspartyl/D-aspartyl protein methyltransferase family.

The protein localises to the cytoplasm. It catalyses the reaction [protein]-L-isoaspartate + S-adenosyl-L-methionine = [protein]-L-isoaspartate alpha-methyl ester + S-adenosyl-L-homocysteine. Catalyzes the methyl esterification of L-isoaspartyl residues in peptides and proteins that result from spontaneous decomposition of normal L-aspartyl and L-asparaginyl residues. It plays a role in the repair and/or degradation of damaged proteins. In Protochlamydia amoebophila (strain UWE25), this protein is Protein-L-isoaspartate O-methyltransferase.